The following is a 294-amino-acid chain: MALTGTDRVKRGMAEMQKGGVIMDVVNAEQAKIAEAAGAVAVMALERVPADIRAAGGVARMADPTVVEEVMNAVSIPVMAKVRIGHYVEARVLEALGVDYIDESEVLTPADEEFHIDKRQFTVPFVCGCRDLGEAARRIAEGASMLRTKGEPGTGNIVEAVRHMRKVNAQIRKVVSMSEDELVAEAKQLGAPVEVLREIKRIGRLPVVNFAAGGVATPADAALMMHLGADGVFVGSGIFKSENPEKYARAIVEATTHYEDYELIAHLSKGLGGAMRGIDVATLLPEHRMQERGW.

Asp-24 is a D-ribose 5-phosphate binding site. The Schiff-base intermediate with D-ribose 5-phosphate role is filled by Lys-81. Gly-153 provides a ligand contact to D-ribose 5-phosphate. Arg-165 is a binding site for D-glyceraldehyde 3-phosphate. D-ribose 5-phosphate is bound by residues Gly-214 and 235 to 236 (GS).

The protein belongs to the PdxS/SNZ family. As to quaternary structure, in the presence of PdxT, forms a dodecamer of heterodimers.

It carries out the reaction aldehydo-D-ribose 5-phosphate + D-glyceraldehyde 3-phosphate + L-glutamine = pyridoxal 5'-phosphate + L-glutamate + phosphate + 3 H2O + H(+). It functions in the pathway cofactor biosynthesis; pyridoxal 5'-phosphate biosynthesis. Functionally, catalyzes the formation of pyridoxal 5'-phosphate from ribose 5-phosphate (RBP), glyceraldehyde 3-phosphate (G3P) and ammonia. The ammonia is provided by the PdxT subunit. Can also use ribulose 5-phosphate and dihydroxyacetone phosphate as substrates, resulting from enzyme-catalyzed isomerization of RBP and G3P, respectively. This chain is Pyridoxal 5'-phosphate synthase subunit PdxS, found in Geobacillus thermodenitrificans (strain NG80-2).